The following is a 535-amino-acid chain: Probable serine/threonine protein phosphatase 2A regulatory subunit B''delta (535 aa).

The tract at residues 67–104 (SGTNSGSNSPLASMFPARNGPPLSPRNSTGSPRIARQR) is disordered. EF-hand domains lie at 174–209 (VPSFFSTSIFKKVDTNNTGFVKREDFIDYWVKGNML) and 387–422 (SSEPSLEYWFKCIDLDANGVLTRNELQFFYEEQLHR). Positions 400, 402, 404, and 411 each coordinate Ca(2+).

In terms of assembly, PP2A consists of a common heterodimeric core enzyme, composed of a 36 kDa catalytic subunit (subunit C) and a 65 kDa constant regulatory subunit (PR65 or subunit A), that associates with a variety of regulatory subunits. Proteins that associate with the core dimer include three families of regulatory subunits B (the R2/B/PR55/B55, R3/B''/PR72/PR130/PR59 and R5/B'/B56 families) and cell signaling molecules.

Functionally, probable regulatory subunit of type 2A protein phosphatase. The protein is Probable serine/threonine protein phosphatase 2A regulatory subunit B''delta (B''DELTA) of Arabidopsis thaliana (Mouse-ear cress).